The primary structure comprises 728 residues: MSTEAKCPFNHTAAGGTSNKDWWPNQLNLNILHRHSALSDPMDKDFDYAQAFKKLDLAAVKRDLQALMTTSQDWWPADFGHYGGLFVRMAWHSAGTYRIADGRGGAGGGQQRFAPLNSWPDNANLDKARRLLWPIKQKYGRNISWADLLILTGNVALESMGFKTFGYAGGRADTWEPDDVYWGSEKIWLELSGGPNSRYSGDRDLENPLAAVQMGLIYVNPEGPDGNPDPVAAARDIRDTFARMAMNDEETVALIAGGHTFGKTHGAGPATDVGPEPEAAGIELQGLGWKSAYASGKGHDAITSGLEVTWTSTPTKWSHDFFKHLFSYEWELTKSPAGAHQWVAKGADEVIPDAFDASKKHRPTMLTTDLSLRFDPAYEKISRRFYENPAEFADAFARAWFKLTHRDMGPRARYLGPEVPAEELLWQDPIPAVDHPLIDDADVAALKAKVLASGLSVAQLVSTAWASASTFRGSDKRGGANGARIRLAPQKDWEVNQPAALAAVLETLEGVRKAFNDAQTGGKKVSLADLIVLAGAAGVEQAAKSAGVAVTVPFAPGRMDASQEQTDVDAMAVLEPVADGFRNYLKSAYKTPAEALLVDKAQLLTLNGPELTVLVGGLRVLGANVGDAKHGVFTDRPGTLSNDFFVNLLDMGTEWKPVSAANDVFEGRDRATGQVKWTGTRVDLIFGSHSQLRALAEVYGSADANEKFVRDFVAAWNKVMNLDRFDLA.

The tryptophyl-tyrosyl-methioninium (Trp-Tyr) (with M-244) cross-link spans 91-218; the sequence is WHSAGTYRIA…LAAVQMGLIY (128 aa). His92 acts as the Proton acceptor in catalysis. Positions 218-244 form a cross-link, tryptophyl-tyrosyl-methioninium (Tyr-Met) (with W-91); that stretch reads YVNPEGPDGNPDPVAAARDIRDTFARM. His259 contributes to the heme b binding site.

The protein belongs to the peroxidase family. Peroxidase/catalase subfamily. In terms of assembly, homodimer or homotetramer. Heme b is required as a cofactor. Formation of the three residue Trp-Tyr-Met cross-link is important for the catalase, but not the peroxidase activity of the enzyme.

It catalyses the reaction H2O2 + AH2 = A + 2 H2O. It carries out the reaction 2 H2O2 = O2 + 2 H2O. Its function is as follows. Bifunctional enzyme with both catalase and broad-spectrum peroxidase activity. This Burkholderia ambifaria (strain ATCC BAA-244 / DSM 16087 / CCUG 44356 / LMG 19182 / AMMD) (Burkholderia cepacia (strain AMMD)) protein is Catalase-peroxidase 1.